Reading from the N-terminus, the 118-residue chain is Large ribosomal subunit protein bL20 (118 aa).

Belongs to the bacterial ribosomal protein bL20 family.

In terms of biological role, binds directly to 23S ribosomal RNA and is necessary for the in vitro assembly process of the 50S ribosomal subunit. It is not involved in the protein synthesizing functions of that subunit. The sequence is that of Large ribosomal subunit protein bL20 from Lachnoclostridium phytofermentans (strain ATCC 700394 / DSM 18823 / ISDg) (Clostridium phytofermentans).